Reading from the N-terminus, the 299-residue chain is Coenzyme PQQ synthesis protein B (299 aa).

Belongs to the PqqB family.

The protein operates within cofactor biosynthesis; pyrroloquinoline quinone biosynthesis. Functionally, may be involved in the transport of PQQ or its precursor to the periplasm. The chain is Coenzyme PQQ synthesis protein B from Methylorubrum populi (strain ATCC BAA-705 / NCIMB 13946 / BJ001) (Methylobacterium populi).